The sequence spans 25 residues: Xenoposin precursor fragment BM3 (25 aa).

Expressed by the skin glands.

It is found in the secreted. Its function is as follows. Antimicrobial peptide. The chain is Xenoposin precursor fragment BM3 from Xenopus boumbaensis (Mawa clawed frog).